Consider the following 390-residue polypeptide: Succinyl-diaminopimelate desuccinylase 1 (390 aa).

Residue His76 participates in Zn(2+) binding. Asp78 is a catalytic residue. Asp109 is a Zn(2+) binding site. The Proton acceptor role is filled by Glu143. The Zn(2+) site is built by Glu144, Glu172, and His363.

It belongs to the peptidase M20A family. DapE subfamily. As to quaternary structure, homodimer. Zn(2+) serves as cofactor. Requires Co(2+) as cofactor.

It catalyses the reaction N-succinyl-(2S,6S)-2,6-diaminopimelate + H2O = (2S,6S)-2,6-diaminopimelate + succinate. The protein operates within amino-acid biosynthesis; L-lysine biosynthesis via DAP pathway; LL-2,6-diaminopimelate from (S)-tetrahydrodipicolinate (succinylase route): step 3/3. In terms of biological role, catalyzes the hydrolysis of N-succinyl-L,L-diaminopimelic acid (SDAP), forming succinate and LL-2,6-diaminopimelate (DAP), an intermediate involved in the bacterial biosynthesis of lysine and meso-diaminopimelic acid, an essential component of bacterial cell walls. This is Succinyl-diaminopimelate desuccinylase 1 from Alteromonas mediterranea (strain DSM 17117 / CIP 110805 / LMG 28347 / Deep ecotype).